The sequence spans 1354 residues: Phosphoribosylformylglycinamidine synthase (1354 aa).

ATP is bound by residues 327 to 338 (GATTGTGGRLRD), 407 to 409 (SGF), and A714. Mg(2+) is bound by residues D715, E754, N758, and D918. An ATP-binding site is contributed by S920. The region spanning 1087-1337 (VAVLREEGVN…EVSPTQSESP (251 aa)) is the Glutamine amidotransferase type-1 domain. C1180 serves as the catalytic Nucleophile. Active-site residues include H1310 and E1312.

In the N-terminal section; belongs to the FGAMS family.

The catalysed reaction is N(2)-formyl-N(1)-(5-phospho-beta-D-ribosyl)glycinamide + L-glutamine + ATP + H2O = 2-formamido-N(1)-(5-O-phospho-beta-D-ribosyl)acetamidine + L-glutamate + ADP + phosphate + H(+). Its pathway is purine metabolism; IMP biosynthesis via de novo pathway; 5-amino-1-(5-phospho-D-ribosyl)imidazole from N(2)-formyl-N(1)-(5-phospho-D-ribosyl)glycinamide: step 1/2. Phosphoribosylformylglycinamidine synthase involved in the purines biosynthetic pathway. Catalyzes the ATP-dependent conversion of formylglycinamide ribonucleotide (FGAR) and glutamine to yield formylglycinamidine ribonucleotide (FGAM) and glutamate. Because of its role in metabolisms, is involved in sleep regulation. The chain is Phosphoribosylformylglycinamidine synthase from Drosophila melanogaster (Fruit fly).